A 409-amino-acid polypeptide reads, in one-letter code: Thiaminase-1 (409 aa).

A signal peptide spans 1–29; sequence MSKVKGFIYKPLMVMLALLLVVVSPAGAG. The Nucleophile role is filled by cysteine 143. Glutamate 271 (proton acceptor) is an active-site residue.

In terms of assembly, monomer.

It is found in the secreted. It carries out the reaction pyridine + thiamine = heteropyrithiamine + 5-(2-hydroxyethyl)-4-methylthiazole. Degrades thiamine by replacing its thiazole moiety with a wide range of nucleophiles. The chain is Thiaminase-1 from Paenibacillus thiaminolyticus (Bacillus thiaminolyticus).